We begin with the raw amino-acid sequence, 365 residues long: tRNA/tmRNA (uracil-C(5))-methyltransferase (365 aa).

S-adenosyl-L-methionine contacts are provided by Gln-189, Tyr-217, Asn-222, Glu-238, and Asp-298. Cys-323 acts as the Nucleophile in catalysis. Glu-357 serves as the catalytic Proton acceptor.

This sequence belongs to the class I-like SAM-binding methyltransferase superfamily. RNA M5U methyltransferase family. TrmA subfamily.

The catalysed reaction is uridine(54) in tRNA + S-adenosyl-L-methionine = 5-methyluridine(54) in tRNA + S-adenosyl-L-homocysteine + H(+). It carries out the reaction uridine(341) in tmRNA + S-adenosyl-L-methionine = 5-methyluridine(341) in tmRNA + S-adenosyl-L-homocysteine + H(+). Dual-specificity methyltransferase that catalyzes the formation of 5-methyluridine at position 54 (m5U54) in all tRNAs, and that of position 341 (m5U341) in tmRNA (transfer-mRNA). In Psychromonas ingrahamii (strain DSM 17664 / CCUG 51855 / 37), this protein is tRNA/tmRNA (uracil-C(5))-methyltransferase.